A 285-amino-acid chain; its full sequence is Pseudouridine-5'-phosphate glycosidase (285 aa).

Glutamate 17 acts as the Proton donor in catalysis. Residues lysine 77 and valine 97 each contribute to the substrate site. Aspartate 126 serves as a coordination point for Mn(2+). A substrate-binding site is contributed by 128–130; it reads SQD. Catalysis depends on lysine 147, which acts as the Nucleophile.

Belongs to the pseudouridine-5'-phosphate glycosidase family. In terms of assembly, homotrimer. Mn(2+) is required as a cofactor.

The enzyme catalyses D-ribose 5-phosphate + uracil = psi-UMP + H2O. Its function is as follows. Catalyzes the reversible cleavage of pseudouridine 5'-phosphate (PsiMP) to ribose 5-phosphate and uracil. Functions biologically in the cleavage direction, as part of a pseudouridine degradation pathway. The sequence is that of Pseudouridine-5'-phosphate glycosidase from Thermotoga sp. (strain RQ2).